The chain runs to 223 residues: Probable transaldolase (223 aa).

Residue Lys92 is the Schiff-base intermediate with substrate of the active site.

It belongs to the transaldolase family. Type 3B subfamily.

Its subcellular location is the cytoplasm. The catalysed reaction is D-sedoheptulose 7-phosphate + D-glyceraldehyde 3-phosphate = D-erythrose 4-phosphate + beta-D-fructose 6-phosphate. It functions in the pathway carbohydrate degradation; pentose phosphate pathway; D-glyceraldehyde 3-phosphate and beta-D-fructose 6-phosphate from D-ribose 5-phosphate and D-xylulose 5-phosphate (non-oxidative stage): step 2/3. Its function is as follows. Transaldolase is important for the balance of metabolites in the pentose-phosphate pathway. This chain is Probable transaldolase, found in Thermus thermophilus (strain ATCC BAA-163 / DSM 7039 / HB27).